Reading from the N-terminus, the 192-residue chain is uncharacterized protein (192 aa).

A coiled-coil region spans residues 53-111; the sequence is CLKESVERARKVYLSLLKDYERKSREYEKAYENYLKELRTYRETLYRIKEDLKFYERIC.

This is an uncharacterized protein from Aquifex aeolicus (strain VF5).